The chain runs to 122 residues: Putative 2'-deoxynucleoside 5'-phosphate N-hydrolase 1 (122 aa).

Residues 4 to 10 (FLSGSIR), Tyr19, His37, Glu83, and 105 to 107 (SAM) contribute to the substrate site.

Belongs to the 2'-deoxynucleoside 5'-phosphate N-hydrolase 1 family. As to quaternary structure, monomer and homodimer.

The catalysed reaction is a pyrimidine 2'-deoxyribonucleoside 5'-phosphate + H2O = a pyrimidine nucleobase + 2-deoxy-D-ribose 5-phosphate. It catalyses the reaction a purine 2'-deoxyribonucleoside 5'-phosphate + H2O = a purine nucleobase + 2-deoxy-D-ribose 5-phosphate. In terms of biological role, catalyzes the cleavage of the N-glycosidic bond of deoxyribonucleoside 5'-monophosphates to yield deoxyribose 5-phosphate and a purine or pyrimidine base. In Methanococcoides burtonii (strain DSM 6242 / NBRC 107633 / OCM 468 / ACE-M), this protein is Putative 2'-deoxynucleoside 5'-phosphate N-hydrolase 1.